The primary structure comprises 113 residues: Ribosome-binding factor A (113 aa).

This sequence belongs to the RbfA family. In terms of assembly, monomer. Binds 30S ribosomal subunits, but not 50S ribosomal subunits or 70S ribosomes.

It localises to the cytoplasm. One of several proteins that assist in the late maturation steps of the functional core of the 30S ribosomal subunit. Associates with free 30S ribosomal subunits (but not with 30S subunits that are part of 70S ribosomes or polysomes). Required for efficient processing of 16S rRNA. May interact with the 5'-terminal helix region of 16S rRNA. The polypeptide is Ribosome-binding factor A (Oceanobacillus iheyensis (strain DSM 14371 / CIP 107618 / JCM 11309 / KCTC 3954 / HTE831)).